Consider the following 994-residue polypeptide: E3 ubiquitin-protein ligase Arkadia (994 aa).

Residues Lys19, Lys28, Lys34, Lys47, Lys59, Lys73, Lys87, Lys96, and Lys110 each participate in a glycyl lysine isopeptide (Lys-Gly) (interchain with G-Cter in SUMO2) cross-link. A compositionally biased stretch (basic and acidic residues) spans 66-89 (HLCDDSQKQEKEMNGNQQEQEKSL). Residues 66–106 (HLCDDSQKQEKEMNGNQQEQEKSLVVRKKRKSQQAGPSYVQ) form a disordered region. The tract at residues 120-191 (QHLGTPSDED…HKWPRTETES (72 aa)) is disordered. Over residues 132–151 (SSFSDCLSSPSSSLHFGDSD) the composition is skewed to low complexity. Residues 164-173 (RHSQTILNAK) show a composition bias toward polar residues. Lys173 participates in a covalent cross-link: Glycyl lysine isopeptide (Lys-Gly) (interchain with G-Cter in SUMO2). Basic residues predominate over residues 174–184 (SRSHSARSHKW). Residues Lys198 and Lys218 each participate in a glycyl lysine isopeptide (Lys-Gly) (interchain with G-Cter in SUMO2) cross-link. A disordered region spans residues 212–277 (CRKRFVKNNS…SSSTEGEEDL (66 aa)). A compositionally biased stretch (basic residues) spans 234–247 (MQRKKREVLARRKY). The segment at 241-404 (VLARRKYALL…VPTTSARMES (164 aa)) is interaction with AXIN1. The segment covering 252-271 (SSSSSSENDLSSESSSSSST) has biased composition (low complexity). Positions 300–304 (VVVIE) match the SUMO interaction motif 1 (SIM) motif. Residues 325-331 (EVEIVTV) carry the SUMO interaction motif 2 (SIM) motif. Residues 337–371 (SRSTLGHSRSHWSQGSSSHASRPQEPRNRSRISTV) are disordered. Residues 347 to 357 (HWSQGSSSHAS) show a composition bias toward low complexity. Residues 382–386 (VVDLT) carry the SUMO interaction motif 3 (SIM) motif. Disordered stretches follow at residues 388 to 476 (DEDE…AMPR), 508 to 537 (HGHH…DPAC), 610 to 684 (APSQ…VDYV), and 696 to 742 (ISSH…APPA). Residues 395–467 (VPTTSARMES…SRRTTSSAVT (73 aa)) show a composition bias toward polar residues. Positions 508 to 522 (HGHHFQHHHHHHHTP) are enriched in basic residues. Residues 670–680 (NPPPQTQPPPQ) are compositionally biased toward pro residues. Positions 907 to 909 (YPH) are ubiquitin binding. Glycyl lysine isopeptide (Lys-Gly) (interchain with G-Cter in SUMO2) cross-links involve residues Lys923 and Lys927. 2 residues coordinate Zn(2+): Cys942 and Cys945. Residues 942–983 (CTICLSILEEGEDVRRLPCMHLFHQVCVDQWLITNKKCPICR) form an RING-type; atypical zinc finger. Positions 957–961 (RLPCM) are ubiquitin binding. Residues His965 and Cys968 each contribute to the Zn(2+) site.

This sequence belongs to the Arkadia family. Monomer. Interacts with SMAD6, SMAD7, AXIN1, AXIN2 and SKIL isoform SNON. Interacts with (phosphorylated) SMAD2 and SMAD3. Part of a complex containing RNF111, AXIN1 and SMAD7. Interacts (via SIM domains) with SUMO1 and SUMO2. As to expression, broadly expressed.

The protein localises to the nucleus. Its subcellular location is the cytoplasm. It is found in the PML body. It carries out the reaction S-ubiquitinyl-[E2 ubiquitin-conjugating enzyme]-L-cysteine + [acceptor protein]-L-lysine = [E2 ubiquitin-conjugating enzyme]-L-cysteine + N(6)-ubiquitinyl-[acceptor protein]-L-lysine.. It participates in protein modification; protein ubiquitination. With respect to regulation, binds free ubiquitin non-covalently via its RING-type zinc finger. Ubiquitin-binding leads to enhance the E3 ubiquitin-protein ligase activity by stabilizing the ubiquitin-conjugating enzyme E2 (donor ubiquitin) in the 'closed' conformation and activating ubiquitin transfer. E3 ubiquitin-protein ligase. Required for mesoderm patterning during embryonic development. Acts as an enhancer of the transcriptional responses of the SMAD2/SMAD3 effectors, which are activated downstream of BMP. Acts by mediating ubiquitination and degradation of SMAD inhibitors such as SMAD7, inducing their proteasomal degradation and thereby enhancing the transcriptional activity of TGF-beta and BMP. In addition to enhance transcription of SMAD2/SMAD3 effectors, also regulates their turnover by mediating their ubiquitination and subsequent degradation, coupling their activation with degradation, thereby ensuring that only effectors 'in use' are degraded. Activates SMAD3/SMAD4-dependent transcription by triggering signal-induced degradation of SNON isoform of SKIL. Associates with UBE2D2 as an E2 enzyme. Specifically binds polysumoylated chains via SUMO interaction motifs (SIMs) and mediates ubiquitination of sumoylated substrates. Catalyzes 'Lys-63'-linked ubiquitination of sumoylated XPC in response to UV irradiation, promoting nucleotide excision repair. Mediates ubiquitination and degradation of sumoylated PML. The regulation of the BMP-SMAD signaling is however independent of sumoylation and is not dependent of SUMO interaction motifs (SIMs). The polypeptide is E3 ubiquitin-protein ligase Arkadia (Homo sapiens (Human)).